Here is a 530-residue protein sequence, read N- to C-terminus: Glutamyl-tRNA reductase 2, chloroplastic (530 aa).

A chloroplast-targeting transit peptide spans 1–64; the sequence is MAVSSAFVVT…RCEISPSNKA (64 aa). Substrate is bound by residues 134–137, S194, 199–201, and Q205; these read TCNR and EGQ. C135 acts as the Nucleophile in catalysis. 277-282 contributes to the NADP(+) binding site; it reads GAGKMG.

Belongs to the glutamyl-tRNA reductase family. As to expression, expressed in roots and flowers. Detected in leaves, hypocotyls and cotyledons.

The protein resides in the plastid. The protein localises to the chloroplast. The catalysed reaction is (S)-4-amino-5-oxopentanoate + tRNA(Glu) + NADP(+) = L-glutamyl-tRNA(Glu) + NADPH + H(+). It functions in the pathway porphyrin-containing compound metabolism; protoporphyrin-IX biosynthesis; 5-aminolevulinate from L-glutamyl-tRNA(Glu): step 1/2. Its pathway is porphyrin-containing compound metabolism; chlorophyll biosynthesis. In terms of biological role, catalyzes the NADPH-dependent reduction of glutamyl-tRNA(Glu) to glutamate 1-semialdehyde (GSA). Probably involved in wound-induced supply of heme to defensive hemoproteins outside plastids. This is Glutamyl-tRNA reductase 2, chloroplastic (HEMA2) from Arabidopsis thaliana (Mouse-ear cress).